The primary structure comprises 243 residues: Pyridoxine 5'-phosphate synthase (243 aa).

Position 9 (Asn-9) interacts with 3-amino-2-oxopropyl phosphate. 11–12 contacts 1-deoxy-D-xylulose 5-phosphate; that stretch reads DH. Arg-20 is a binding site for 3-amino-2-oxopropyl phosphate. His-45 functions as the Proton acceptor in the catalytic mechanism. 1-deoxy-D-xylulose 5-phosphate contacts are provided by Arg-47 and His-52. Glu-72 functions as the Proton acceptor in the catalytic mechanism. Thr-102 serves as a coordination point for 1-deoxy-D-xylulose 5-phosphate. His-193 functions as the Proton donor in the catalytic mechanism. 3-amino-2-oxopropyl phosphate is bound by residues Gly-194 and 215-216; that span reads GH.

The protein belongs to the PNP synthase family. Homooctamer; tetramer of dimers.

It localises to the cytoplasm. The catalysed reaction is 3-amino-2-oxopropyl phosphate + 1-deoxy-D-xylulose 5-phosphate = pyridoxine 5'-phosphate + phosphate + 2 H2O + H(+). It functions in the pathway cofactor biosynthesis; pyridoxine 5'-phosphate biosynthesis; pyridoxine 5'-phosphate from D-erythrose 4-phosphate: step 5/5. In terms of biological role, catalyzes the complicated ring closure reaction between the two acyclic compounds 1-deoxy-D-xylulose-5-phosphate (DXP) and 3-amino-2-oxopropyl phosphate (1-amino-acetone-3-phosphate or AAP) to form pyridoxine 5'-phosphate (PNP) and inorganic phosphate. The polypeptide is Pyridoxine 5'-phosphate synthase (Salmonella typhimurium (strain LT2 / SGSC1412 / ATCC 700720)).